A 481-amino-acid polypeptide reads, in one-letter code: ATP synthase subunit beta, chloroplastic (481 aa).

Residue 162–169 (GGAGVGKT) coordinates ATP.

This sequence belongs to the ATPase alpha/beta chains family. In terms of assembly, F-type ATPases have 2 components, CF(1) - the catalytic core - and CF(0) - the membrane proton channel. CF(1) has five subunits: alpha(3), beta(3), gamma(1), delta(1), epsilon(1). CF(0) has four main subunits: a(1), b(1), b'(1) and c(9-12).

It is found in the plastid. The protein localises to the chloroplast thylakoid membrane. The enzyme catalyses ATP + H2O + 4 H(+)(in) = ADP + phosphate + 5 H(+)(out). Functionally, produces ATP from ADP in the presence of a proton gradient across the membrane. The catalytic sites are hosted primarily by the beta subunits. The polypeptide is ATP synthase subunit beta, chloroplastic (Chlorella vulgaris (Green alga)).